Reading from the N-terminus, the 98-residue chain is Large ribosomal subunit protein eL21 (98 aa).

Residues Met1–Gln23 are disordered. Basic residues predominate over residues Lys7 to Gln23.

The protein belongs to the eukaryotic ribosomal protein eL21 family.

In Nanoarchaeum equitans (strain Kin4-M), this protein is Large ribosomal subunit protein eL21.